A 193-amino-acid chain; its full sequence is D-alanyl-D-alanine dipeptidase (193 aa).

Zn(2+)-binding residues include His-98 and Asp-105. The active-site Proton donor/acceptor is the Glu-162. His-165 lines the Zn(2+) pocket.

Belongs to the peptidase M15D family. Zn(2+) is required as a cofactor.

The protein localises to the cytoplasm. It catalyses the reaction D-alanyl-D-alanine + H2O = 2 D-alanine. Its function is as follows. Catalyzes hydrolysis of the D-alanyl-D-alanine dipeptide. May have a role in cell-wall turnover. This Escherichia coli (strain K12) protein is D-alanyl-D-alanine dipeptidase.